Here is a 405-residue protein sequence, read N- to C-terminus: Glucoside xylosyltransferase 1 (405 aa).

At 1–2 (MR) the chain is on the cytoplasmic side. The helical; Signal-anchor for type II membrane protein transmembrane segment at 3–23 (IYLRTFGLCIVVALLSLVFLF) threads the bilayer. At 24 to 405 (SKHDEGSFSA…RLQRATPPGD (382 aa)) the chain is on the lumenal side. The interval 46-65 (SFNGAKAKQRPTATTSHRDV) is disordered. N202, N243, N277, and N372 each carry an N-linked (GlcNAc...) asparagine glycan.

This sequence belongs to the glycosyltransferase 8 family.

The protein resides in the membrane. It carries out the reaction 3-O-(beta-D-glucosyl)-L-seryl-[EGF-like domain protein] + UDP-alpha-D-xylose = 3-O-[alpha-D-xylosyl-(1-&gt;3)-beta-D-glucosyl]-L-seryl-[EGF-like domain protein] + UDP + H(+). Glycosyltransferase which elongates the O-linked glucose attached to EGF-like repeats in the extracellular domain of Notch proteins by catalyzing the addition of xylose. The sequence is that of Glucoside xylosyltransferase 1 (gxylt1) from Danio rerio (Zebrafish).